A 518-amino-acid polypeptide reads, in one-letter code: Serine/threonine-protein kinase PRR1 (518 aa).

Residue methionine 1 is modified to N-acetylmethionine. A compositionally biased stretch (polar residues) spans 1 to 12 (MDEYSSIYSQPK). Residues 1–59 (MDEYSSIYSQPKTPRLKQEGFPDSIGDQHEKALIDENGEEDKKMASTEGTTGDSRSTPL) are disordered. Residues 16–45 (LKQEGFPDSIGDQHEKALIDENGEEDKKMA) are compositionally biased toward basic and acidic residues. Over residues 47–59 (TEGTTGDSRSTPL) the composition is skewed to polar residues. Serine 132 is subject to Phosphoserine. The region spanning 192 to 508 (WKKVRPIGSG…INEIYESPFV (317 aa)) is the Protein kinase domain. ATP-binding positions include 198 to 206 (IGSGNFSTV) and lysine 225. The Proton acceptor role is filled by aspartate 354.

The protein belongs to the protein kinase superfamily. CAMK Ser/Thr protein kinase family. NIM1 subfamily.

It is found in the cytoplasm. It carries out the reaction L-seryl-[protein] + ATP = O-phospho-L-seryl-[protein] + ADP + H(+). The catalysed reaction is L-threonyl-[protein] + ATP = O-phospho-L-threonyl-[protein] + ADP + H(+). In terms of biological role, protein kinase that functions as a regulator in the pheromone-induced mating pathway downstream of mitogen-activated protein kinase (MAPK) FUS3. Diminishes transcriptional induction of genes in response to pheromone signaling. This Saccharomyces cerevisiae (strain ATCC 204508 / S288c) (Baker's yeast) protein is Serine/threonine-protein kinase PRR1 (PRR1).